The following is a 113-amino-acid chain: Cell cycle control protein 50C (113 aa).

The Cytoplasmic segment spans residues 1–34 (MEERAQHCLSRLLDNSALKQQELPIHRLYFTARR). Residues 35–55 (VLFVFFATGIFCLCMGIILIL) traverse the membrane as a helical segment. Topologically, residues 56 to 113 (SARSTQEIEINYTRICANCAKLRENASNFDKECTCSIPFYLSGKMMVGEIQETRLTLH) are extracellular. N-linked (GlcNAc...) asparagine glycosylation is present at Asn66.

This sequence belongs to the CDC50/LEM3 family. As to expression, specifically expressed in testis.

The protein resides in the membrane. In Homo sapiens (Human), this protein is Cell cycle control protein 50C.